We begin with the raw amino-acid sequence, 425 residues long: Ribosomal protein uS12 methylthiotransferase RimO (425 aa).

The MTTase N-terminal domain occupies 2–115 (KNFTVITLGC…IIDYIKQFSK (114 aa)). Residues C11, C47, C78, C142, C146, and C149 each coordinate [4Fe-4S] cluster. Residues 128–357 (VEPPSYRYIK…MARQAVISLE (230 aa)) form the Radical SAM core domain. The TRAM domain occupies 360–425 (RALIGKKYEA…YEYDVKGVIV (66 aa)).

This sequence belongs to the methylthiotransferase family. RimO subfamily. Requires [4Fe-4S] cluster as cofactor.

The protein localises to the cytoplasm. The enzyme catalyses L-aspartate(89)-[ribosomal protein uS12]-hydrogen + (sulfur carrier)-SH + AH2 + 2 S-adenosyl-L-methionine = 3-methylsulfanyl-L-aspartate(89)-[ribosomal protein uS12]-hydrogen + (sulfur carrier)-H + 5'-deoxyadenosine + L-methionine + A + S-adenosyl-L-homocysteine + 2 H(+). In terms of biological role, catalyzes the methylthiolation of an aspartic acid residue of ribosomal protein uS12. In Thermodesulfovibrio yellowstonii (strain ATCC 51303 / DSM 11347 / YP87), this protein is Ribosomal protein uS12 methylthiotransferase RimO.